The sequence spans 396 residues: Elongation factor Tu (396 aa).

The tr-type G domain occupies 10–205; the sequence is KSHANIGTIG…AVDEYIPTPE (196 aa). The tract at residues 19–26 is G1; the sequence is GHVDHGKT. 19 to 26 contributes to the GTP binding site; the sequence is GHVDHGKT. A Mg(2+)-binding site is contributed by Thr-26. A G2 region spans residues 61–65; the sequence is GITIS. Residues 82–85 form a G3 region; sequence DCPG. GTP is bound by residues 82-86 and 137-140; these read DCPGH and NKCD. The interval 137 to 140 is G4; the sequence is NKCD. The tract at residues 175-177 is G5; that stretch reads SAL.

It belongs to the TRAFAC class translation factor GTPase superfamily. Classic translation factor GTPase family. EF-Tu/EF-1A subfamily. As to quaternary structure, monomer.

Its subcellular location is the cytoplasm. The enzyme catalyses GTP + H2O = GDP + phosphate + H(+). Its function is as follows. GTP hydrolase that promotes the GTP-dependent binding of aminoacyl-tRNA to the A-site of ribosomes during protein biosynthesis. The chain is Elongation factor Tu from Bacillus licheniformis (strain ATCC 14580 / DSM 13 / JCM 2505 / CCUG 7422 / NBRC 12200 / NCIMB 9375 / NCTC 10341 / NRRL NRS-1264 / Gibson 46).